We begin with the raw amino-acid sequence, 540 residues long: DNA topoisomerase 1 (540 aa).

The Toprim domain occupies 1 to 110 (MELFIVESPT…NIKRAVFYEI (110 aa)). Mg(2+) contacts are provided by glutamate 7 and aspartate 79. Residues 126–536 (NMNLVYAQFA…FMEKIFGKEL (411 aa)) enclose the Topo IA-type catalytic domain. The interval 161-166 (SAGRVQ) is interaction with DNA. Residue tyrosine 281 is the O-(5'-phospho-DNA)-tyrosine intermediate of the active site.

The protein belongs to the type IA topoisomerase family. As to quaternary structure, monomer. The cofactor is Mg(2+).

It carries out the reaction ATP-independent breakage of single-stranded DNA, followed by passage and rejoining.. Its function is as follows. Releases the supercoiling and torsional tension of DNA, which is introduced during the DNA replication and transcription, by transiently cleaving and rejoining one strand of the DNA duplex. Introduces a single-strand break via transesterification at a target site in duplex DNA. The scissile phosphodiester is attacked by the catalytic tyrosine of the enzyme, resulting in the formation of a DNA-(5'-phosphotyrosyl)-enzyme intermediate and the expulsion of a 3'-OH DNA strand. The free DNA strand then undergoes passage around the unbroken strand, thus removing DNA supercoils. Finally, in the religation step, the DNA 3'-OH attacks the covalent intermediate to expel the active-site tyrosine and restore the DNA phosphodiester backbone. In Aquifex aeolicus (strain VF5), this protein is DNA topoisomerase 1.